Here is a 459-residue protein sequence, read N- to C-terminus: Argininosuccinate lyase (459 aa).

The segment at 440–459 is disordered; it reads DEKKLEELRQNENRDNVYNP.

The protein belongs to the lyase 1 family. Argininosuccinate lyase subfamily.

The protein localises to the cytoplasm. The enzyme catalyses 2-(N(omega)-L-arginino)succinate = fumarate + L-arginine. It functions in the pathway amino-acid biosynthesis; L-arginine biosynthesis; L-arginine from L-ornithine and carbamoyl phosphate: step 3/3. The chain is Argininosuccinate lyase from Pyrococcus furiosus (strain ATCC 43587 / DSM 3638 / JCM 8422 / Vc1).